A 480-amino-acid chain; its full sequence is Protein nucleotidyltransferase YdiU (480 aa).

Residues Gly-87, Gly-89, Arg-90, Lys-110, Asp-122, Gly-123, Arg-173, and Arg-180 each coordinate ATP. Asp-245 acts as the Proton acceptor in catalysis. Mg(2+) contacts are provided by Asn-246 and Asp-255. An ATP-binding site is contributed by Asp-255.

The protein belongs to the SELO family. Mg(2+) is required as a cofactor. The cofactor is Mn(2+).

It catalyses the reaction L-seryl-[protein] + ATP = 3-O-(5'-adenylyl)-L-seryl-[protein] + diphosphate. The enzyme catalyses L-threonyl-[protein] + ATP = 3-O-(5'-adenylyl)-L-threonyl-[protein] + diphosphate. The catalysed reaction is L-tyrosyl-[protein] + ATP = O-(5'-adenylyl)-L-tyrosyl-[protein] + diphosphate. It carries out the reaction L-histidyl-[protein] + UTP = N(tele)-(5'-uridylyl)-L-histidyl-[protein] + diphosphate. It catalyses the reaction L-seryl-[protein] + UTP = O-(5'-uridylyl)-L-seryl-[protein] + diphosphate. The enzyme catalyses L-tyrosyl-[protein] + UTP = O-(5'-uridylyl)-L-tyrosyl-[protein] + diphosphate. Its function is as follows. Nucleotidyltransferase involved in the post-translational modification of proteins. It can catalyze the addition of adenosine monophosphate (AMP) or uridine monophosphate (UMP) to a protein, resulting in modifications known as AMPylation and UMPylation. This chain is Protein nucleotidyltransferase YdiU, found in Jannaschia sp. (strain CCS1).